We begin with the raw amino-acid sequence, 845 residues long: Proto-oncogene vav (845 aa).

The Calponin-homology (CH) domain maps to Met1 to Pro119. Positions Lys194 to Val373 constitute a DH domain. Residues Arg402–Ser504 enclose the PH domain. A Phorbol-ester/DAG-type zinc finger spans residues Gly515–Cys564. In terms of domain architecture, SH3 1 spans Leu592–His660. Positions Trp671–Tyr765 constitute an SH2 domain. The SH3 2 domain maps to Lys782–Ser842. Phosphotyrosine occurs at positions 826 and 844.

In terms of assembly, interacts with SHB. Interacts with APS, DOCK2, GRB2, GRB3, DOCK2, SLA, TEC and ZNF655/VIK. Interacts with SIAH2; without leading to its degradation. Associates with BLNK, PLCG1, GRB2 and NCK1 in a B-cell antigen receptor-dependent fashion. Interacts with CBLB; which inhibits tyrosine phosphorylation and down-regulates activity. May interact with CCPG1. Interacts with CLNK. Interacts with THEMIS2. Interacts with NEK3 and this interaction is prolactin-dependent. Interacts with ITK. Interacts with PTK2B/PYK2. Interacts with HCK. Interacts with PTK2B/PYK2. Interacts (via SH2 domain) with SYK. Interacts with ANKRD54. Interacts with CD6. Interacts with isoform 2 of CRACR2A. Interacts with LCP2; this interaction plays a role in TCR-mediated cytokine production. In terms of processing, phosphorylated by FYN. Phosphorylated on tyrosine residues by HCK in response to IFNG and bacterial lipopolysaccharide (LPS). As to expression, widely expressed in hematopoietic cells but not in other cell types. Found in the spleen and lung.

In terms of biological role, couples tyrosine kinase signals with the activation of the Rho/Rac GTPases, thus leading to cell differentiation and/or proliferation. This Mus musculus (Mouse) protein is Proto-oncogene vav (Vav1).